The chain runs to 325 residues: GMP reductase (325 aa).

The Thioimidate intermediate role is filled by Cys174. 203-226 is a binding site for NADP(+); that stretch reads LIADGGIRTHGDIAKSIRFGASMV.

Belongs to the IMPDH/GMPR family. GuaC type 2 subfamily.

The enzyme catalyses IMP + NH4(+) + NADP(+) = GMP + NADPH + 2 H(+). Functionally, catalyzes the irreversible NADPH-dependent deamination of GMP to IMP. It functions in the conversion of nucleobase, nucleoside and nucleotide derivatives of G to A nucleotides, and in maintaining the intracellular balance of A and G nucleotides. The polypeptide is GMP reductase (Staphylococcus aureus (strain MRSA252)).